A 163-amino-acid polypeptide reads, in one-letter code: Photosystem II extrinsic protein V (163 aa).

Residues 1–26 (MFKKSSQLFSLVFFTIFSIFIGTASA) form the signal peptide. Heme c-binding residues include Cys-63, Cys-66, His-67, and Met-130.

It belongs to the cytochrome c family. PsbV subfamily. PSII is composed of 1 copy each of membrane proteins PsbA, PsbB, PsbC, PsbD, PsbE, PsbF, PsbH, PsbI, PsbJ, PsbK, PsbL, PsbM, PsbT, PsbY, PsbZ, Psb30/Ycf12, at least 3 peripheral proteins of the oxygen-evolving complex and a large number of cofactors. It forms dimeric complexes. Heme c is required as a cofactor.

The protein localises to the plastid. It localises to the chloroplast thylakoid membrane. One of the extrinsic, lumenal subunits of photosystem II (PSII). PSII is a light-driven water plastoquinone oxidoreductase, using light energy to abstract electrons from H(2)O, generating a proton gradient subsequently used for ATP formation. The extrinsic proteins stabilize the structure of photosystem II oxygen-evolving complex (OEC), the ion environment of oxygen evolution and protect the OEC against heat-induced inactivation. In Phaeodactylum tricornutum (strain CCAP 1055/1), this protein is Photosystem II extrinsic protein V.